The primary structure comprises 402 residues: Elongation factor Tu (402 aa).

Residues 16–211 (KEHINIGTIG…AVDSYIDSPV (196 aa)) enclose the tr-type G domain. Positions 25-32 (GHVDHGKT) are G1. Residue 25–32 (GHVDHGKT) participates in GTP binding. Residue T32 coordinates Mg(2+). The tract at residues 66–70 (GITIN) is G2. Residues 87-90 (DCPG) form a G3 region. GTP contacts are provided by residues 87-91 (DCPGH) and 142-145 (NKID). Positions 142–145 (NKID) are G4. Residues 181–183 (SAR) are G5.

Belongs to the TRAFAC class translation factor GTPase superfamily. Classic translation factor GTPase family. EF-Tu/EF-1A subfamily. In terms of assembly, monomer.

Its subcellular location is the cytoplasm. It carries out the reaction GTP + H2O = GDP + phosphate + H(+). Its function is as follows. GTP hydrolase that promotes the GTP-dependent binding of aminoacyl-tRNA to the A-site of ribosomes during protein biosynthesis. The sequence is that of Elongation factor Tu from Mesomycoplasma hyopneumoniae (strain J / ATCC 25934 / NCTC 10110) (Mycoplasma hyopneumoniae).